The sequence spans 985 residues: Lateral signaling target protein 2 homolog (985 aa).

Disordered regions lie at residues 310-453, 498-520, 533-640, and 747-892; these read PLGS…ETDE, EYGA…PSTS, LRLP…SSLS, and DNVF…TTTA. Low complexity-rich tracts occupy residues 327 to 348, 384 to 393, and 401 to 422; these read HPTT…TNTH, SLSPNSTPTA, and PSHS…PADW. A compositionally biased stretch (acidic residues) spans 423 to 453; it reads SDGDDEDEEDDDDDIEVEEEELDSTDDETDE. 2 positions are modified to phosphoserine: Ser-537 and Ser-538. 2 stretches are compositionally biased toward basic residues: residues 563-589 and 596-607; these read VYRH…HHQH and HPHRTTRSGRKR. Composition is skewed to low complexity over residues 629 to 640 and 761 to 770; these read ASGDTSAASSLS and NGNQANASAQ. A compositionally biased stretch (polar residues) spans 776 to 785; it reads GSIQRNNTVD. The residue at position 808 (Ser-808) is a Phosphoserine. A compositionally biased stretch (low complexity) spans 812–866; that stretch reads QESASTSTSSSQLHQEQQQLQIQVQRQRNNSVGSNTPSSASSTSSSSEQNSPVSA. Residues 875-885 show a composition bias toward polar residues; it reads QSNNETQMPSS. An FYVE-type zinc finger spans residues 904-964; sequence DGKAPRCMSC…VCRECYVREV (61 aa). Positions 910, 913, 926, 929, 934, 937, 956, and 959 each coordinate Zn(2+).

This sequence belongs to the lst-2 family.

In terms of biological role, negative regulator of epidermal growth factor receptor (EGFR) signaling. The chain is Lateral signaling target protein 2 homolog from Drosophila ananassae (Fruit fly).